Here is an 85-residue protein sequence, read N- to C-terminus: U4-theraphotoxin-Hhn1z (85 aa).

Positions Met1–Ala22 are cleaved as a signal peptide. A propeptide spanning residues Glu23–Arg48 is cleaved from the precursor. 3 cysteine pairs are disulfide-bonded: Cys52/Cys66, Cys56/Cys77, and Cys71/Cys82.

This sequence belongs to the neurotoxin 12 (Hwtx-2) family. 02 (Hwtx-2) subfamily. Expressed by the venom gland.

Its subcellular location is the secreted. Postsynaptic neurotoxin. In Cyriopagopus hainanus (Chinese bird spider), this protein is U4-theraphotoxin-Hhn1z.